A 300-amino-acid polypeptide reads, in one-letter code: Probable low-salt glycan biosynthesis reductase Agl14 (300 aa).

NADH-binding positions include 10–12 (GLL), 46–47 (DI), and 70–72 (AYT). Residues 11 to 12 (LL), 46 to 47 (DI), 70 to 72 (AYT), Tyr109, Tyr135, and Lys139 each bind NADPH. Residues Tyr135 and Lys139 each coordinate NADH. Tyr135 (proton donor/acceptor) is an active-site residue.

Belongs to the dTDP-4-dehydrorhamnose reductase family.

The protein operates within protein modification; protein glycosylation. It functions in the pathway cell surface structure biogenesis; S-layer biogenesis. In terms of biological role, reductase involved in N-glycan biosynthetic pathway that takes place under low-salt conditions (1.75 M instead of 3.4 M). Participates in the formation of the tetrasaccharide present at 'Asn-532' of S-layer glycoprotein Csg, consisting of a sulfated hexose, 2 hexoses and rhamnose. Involved in the addition of final rhamnose (sugar 4) of the tetrasaccharide on the dolichol phosphate carrier. This Haloferax volcanii (strain ATCC 29605 / DSM 3757 / JCM 8879 / NBRC 14742 / NCIMB 2012 / VKM B-1768 / DS2) (Halobacterium volcanii) protein is Probable low-salt glycan biosynthesis reductase Agl14 (agl14).